A 258-amino-acid chain; its full sequence is MSLIDPRAIIDPTVILADNVEVGPWSIIGAGVEIGEGTVVGPHVVLKGPTRIGKHNRIYQFSSVGEDTPDLKYKGEETRLVIGDHNVIREGVTIHRGTVQDRAETTLGDHNLIMAYAHIGHDSVIGNHVILVNNTALAGHVHVDDWAILSGFTLVHQFCHIGAHSFSGMGTAIGKDVPAFVTVFGNPAEARSMNFEGMRRRGFSEEAIHALRRAYKTVYRQGLTIAQAAADLAEPAAQFPEVAVFLQSIQTSTRGIIR.

This sequence belongs to the transferase hexapeptide repeat family. LpxA subfamily. In terms of assembly, homotrimer.

The protein resides in the cytoplasm. The catalysed reaction is a (3R)-hydroxyacyl-[ACP] + UDP-N-acetyl-alpha-D-glucosamine = a UDP-3-O-[(3R)-3-hydroxyacyl]-N-acetyl-alpha-D-glucosamine + holo-[ACP]. It participates in glycolipid biosynthesis; lipid IV(A) biosynthesis; lipid IV(A) from (3R)-3-hydroxytetradecanoyl-[acyl-carrier-protein] and UDP-N-acetyl-alpha-D-glucosamine: step 1/6. In terms of biological role, involved in the biosynthesis of lipid A, a phosphorylated glycolipid that anchors the lipopolysaccharide to the outer membrane of the cell. The sequence is that of Acyl-[acyl-carrier-protein]--UDP-N-acetylglucosamine O-acyltransferase from Pseudomonas savastanoi pv. phaseolicola (strain 1448A / Race 6) (Pseudomonas syringae pv. phaseolicola (strain 1448A / Race 6)).